A 776-amino-acid polypeptide reads, in one-letter code: Structure-specific endonuclease subunit SLX4 (776 aa).

The span at 201–217 (EEQMVSDDNSSTEDDTD) shows a compositional bias: acidic residues. 3 disordered regions span residues 201–223 (EEQM…QNDG), 263–283 (KSLQ…PDQN), and 507–531 (PPLD…KPHS).

It belongs to the SLX4 family. Forms a heterodimer with SLX1. In terms of processing, phosphorylated in response to DNA damage.

The protein resides in the nucleus. Its function is as follows. Regulatory subunit of the SLX1-SLX4 structure-specific endonuclease that resolves DNA secondary structures generated during DNA repair and recombination. Has endonuclease activity towards branched DNA substrates, introducing single-strand cuts in duplex DNA close to junctions with ss-DNA. This chain is Structure-specific endonuclease subunit SLX4, found in Candida albicans (strain SC5314 / ATCC MYA-2876) (Yeast).